Reading from the N-terminus, the 153-residue chain is Ribosome maturation factor RimP (153 aa).

This sequence belongs to the RimP family.

Its subcellular location is the cytoplasm. Functionally, required for maturation of 30S ribosomal subunits. In Coxiella burnetii (strain Dugway 5J108-111), this protein is Ribosome maturation factor RimP.